The following is a 316-amino-acid chain: Bifunctional peptidase and (3S)-lysyl hydroxylase JMJD7 (316 aa).

At C19 the chain carries Cysteine sulfenic acid (-SOH). 2 residues coordinate 2-oxoglutarate: Y123 and T172. Y123 is a binding site for succinate. Residues 124–310 (IQKQNSNLSV…YCYYRMLEQM (187 aa)) enclose the JmjC domain. Positions 175 and 177 each coordinate Fe cation. Residues N181, Y183, and K190 each contribute to the 2-oxoglutarate site. The succinate site is built by Y183 and K190. H278 serves as a coordination point for Fe cation. A 2-oxoglutarate-binding site is contributed by W292.

As to quaternary structure, homodimer; disulfide-linked. The cofactor is Fe(2+). In terms of tissue distribution, expressed in the pars intercerebralis and fan-shaped body, regions known to be involved in sleep.

The protein resides in the nucleus. Its subcellular location is the cytoplasm. The enzyme catalyses L-lysyl-[protein] + 2-oxoglutarate + O2 = (3S)-3-hydroxy-L-lysyl-[protein] + succinate + CO2. Functionally, bifunctional enzyme that acts both as an endopeptidase and 2-oxoglutarate-dependent monooxygenase. Endopeptidase that cleaves histones N-terminal tails at the carboxyl side of methylated arginine or lysine residues, to generate 'tailless nucleosomes', which may trigger transcription elongation. Hydroxylates the guanylate binding protein 128up. May be involved in regulation of behavior and circadian rhythms. The sequence is that of Bifunctional peptidase and (3S)-lysyl hydroxylase JMJD7 from Drosophila melanogaster (Fruit fly).